The chain runs to 369 residues: Ferrochelatase (369 aa).

Residues His210 and Glu291 each contribute to the Fe cation site.

The protein belongs to the ferrochelatase family.

The protein localises to the cytoplasm. It catalyses the reaction heme b + 2 H(+) = protoporphyrin IX + Fe(2+). It participates in porphyrin-containing compound metabolism; protoheme biosynthesis; protoheme from protoporphyrin-IX: step 1/1. Catalyzes the ferrous insertion into protoporphyrin IX. The chain is Ferrochelatase from Thioalkalivibrio sulfidiphilus (strain HL-EbGR7).